A 678-amino-acid chain; its full sequence is Glycine--tRNA ligase beta subunit (678 aa).

It belongs to the class-II aminoacyl-tRNA synthetase family. As to quaternary structure, tetramer of two alpha and two beta subunits.

The protein resides in the cytoplasm. It catalyses the reaction tRNA(Gly) + glycine + ATP = glycyl-tRNA(Gly) + AMP + diphosphate. This is Glycine--tRNA ligase beta subunit from Streptococcus pneumoniae (strain ATCC 700669 / Spain 23F-1).